A 137-amino-acid polypeptide reads, in one-letter code: Large ribosomal subunit protein uL16 (137 aa).

This sequence belongs to the universal ribosomal protein uL16 family. In terms of assembly, part of the 50S ribosomal subunit.

In terms of biological role, binds 23S rRNA and is also seen to make contacts with the A and possibly P site tRNAs. The polypeptide is Large ribosomal subunit protein uL16 (Methylobacterium sp. (strain 4-46)).